The primary structure comprises 460 residues: MLO-like protein 9 (460 aa).

Residues 1 to 21 (MAGGGGGGGGEGPRQLDQTPT) lie on the Extracellular side of the membrane. The helical transmembrane segment at 22–42 (WAVSTVCGVIILISIILELII) threads the bilayer. The Cytoplasmic portion of the chain corresponds to 43-67 (HKVGEVFERKKKKALFEALEKIKNE). A helical transmembrane segment spans residues 68 to 88 (LMVLGFISLLLTFGQNYIASI). At 89 to 158 (CVPSRYGHAM…ISLNALHQVH (70 aa)) the chain is on the extracellular side. Residues 159–179 (IFIFFLAVFHVIYSAITMMLG) form a helical membrane-spanning segment. Topologically, residues 180 to 289 (RAKIRGWKVW…KVVVGIRPEL (110 aa)) are cytoplasmic. A helical membrane pass occupies residues 290–310 (WAFVMLFLLFDVHGWYVTAVI). Over 311–315 (TMIPP) the chain is Extracellular. Residues 316–336 (LLTLAIGTKLQAIISYMALEI) traverse the membrane as a helical segment. Topologically, residues 337–366 (QERHAVIQGMPVVNVSDQHFWFEKPDLVLH) are cytoplasmic. A helical membrane pass occupies residues 367–387 (MIHFVLFQNAFEITYFFWIWY). Residues 388-398 (EFGLRSCFHHH) are Extracellular-facing. Residues 399-419 (FGLIIIRVCLGVGVQFLCSYI) traverse the membrane as a helical segment. The Cytoplasmic segment spans residues 420–460 (TLPLYALVTQMGSTMKRSVFDEQTSKALEQWHKKARKKNEK). The interval 441–460 (EQTSKALEQWHKKARKKNEK) is calmodulin-binding.

It belongs to the MLO family.

It localises to the membrane. May be involved in modulation of pathogen defense and leaf cell death. Activity seems to be regulated by Ca(2+)-dependent calmodulin binding and seems not to require heterotrimeric G proteins. The sequence is that of MLO-like protein 9 (MLO9) from Arabidopsis thaliana (Mouse-ear cress).